A 1423-amino-acid chain; its full sequence is DNA-directed RNA polymerase, mitochondrial (1423 aa).

A mitochondrion-targeting transit peptide spans 1–73 (MLPRTASATR…RATVGFERHL (73 aa)). The interval 266 to 303 (NMPDNVDPDTFAQQQQQQQQQQQQQQEQQQQQDTSIDQ) is disordered. Positions 278–297 (QQQQQQQQQQQQQQEQQQQQ) are enriched in low complexity. Catalysis depends on residues Asp901 and Lys970. A compositionally biased stretch (basic and acidic residues) spans 1055–1064 (EFERSERSPH). The interval 1055 to 1087 (EFERSERSPHGDGTASGENITLAGNPRKSSAHK) is disordered. The active site involves Asp1180. The tract at residues 1316–1342 (VRRGREMDEEGEVDGSEEAVEHEDGMH) is disordered. The segment covering 1322-1336 (MDEEGEVDGSEEAVE) has biased composition (acidic residues).

This sequence belongs to the phage and mitochondrial RNA polymerase family.

It localises to the mitochondrion. The enzyme catalyses RNA(n) + a ribonucleoside 5'-triphosphate = RNA(n+1) + diphosphate. Functionally, DNA-dependent RNA polymerase catalyzes the transcription of DNA into RNA using the four ribonucleoside triphosphates as substrates. The polypeptide is DNA-directed RNA polymerase, mitochondrial (cyt-5) (Neurospora crassa (strain ATCC 24698 / 74-OR23-1A / CBS 708.71 / DSM 1257 / FGSC 987)).